The following is a 342-amino-acid chain: D-alanine--D-alanine ligase (342 aa).

The 195-residue stretch at 132–326 (KLYAKECGIE…VAKHLPKSKN (195 aa)) folds into the ATP-grasp domain. Residue 159–210 (EYPVIIKPNHLGSSIGVSVVYDSSELEYALDVAFEFDDEVLIEPFIEGIEEY) participates in ATP binding. 3 residues coordinate Mg(2+): Asp282, Glu294, and Asn296.

It belongs to the D-alanine--D-alanine ligase family. Requires Mg(2+) as cofactor. Mn(2+) serves as cofactor.

Its subcellular location is the cytoplasm. The enzyme catalyses 2 D-alanine + ATP = D-alanyl-D-alanine + ADP + phosphate + H(+). Its pathway is cell wall biogenesis; peptidoglycan biosynthesis. Functionally, cell wall formation. The sequence is that of D-alanine--D-alanine ligase from Nitratiruptor sp. (strain SB155-2).